Here is a 75-residue protein sequence, read N- to C-terminus: CLAVATA3/ESR (CLE)-related protein 33 (75 aa).

Residues 1-22 (MASWRMLCFVLLFTSILICHDA) form the signal peptide. Proline 67 and proline 70 each carry hydroxyproline. Proline 70 carries an O-linked (Ara...) hydroxyproline glycan.

It belongs to the CLV3/ESR signal peptide family. Post-translationally, the O-glycosylation (arabinosylation) of the hydroxyproline Pro-70 enhances binding affinity of the CLE33p peptide for its receptor. In terms of tissue distribution, expressed in root vasculature.

The protein resides in the secreted. It is found in the extracellular space. Functionally, signaling peptide involved in the regulation of root colonization by arbuscular mycorrhizal (AM) fungi. Moves from root to shoot to function with the receptor kinase SUNN, in a signaling pathway that repress strigolactone biosynthetic genes and strigolactone content in the roots, and consequently reduces the promotion of further colonization by AM fungi. The protein is CLAVATA3/ESR (CLE)-related protein 33 of Medicago truncatula (Barrel medic).